The primary structure comprises 103 residues: Large ribosomal subunit protein bL32m (103 aa).

The transit peptide at 1 to 47 (MALLRGNSLAISQKMLSVFQASALPHISLRIFISPPSIANIWNSILL) directs the protein to the mitochondrion. Cys-77, Cys-80, Cys-90, and Cys-93 together coordinate Zn(2+).

It belongs to the bacterial ribosomal protein bL32 family. In terms of assembly, component of the mitochondrial large ribosomal subunit (mt-LSU). Mature yeast 74S mitochondrial ribosomes consist of a small (37S) and a large (54S) subunit. The 37S small subunit contains a 15S ribosomal RNA (15S mt-rRNA) and at least 32 different proteins. The 54S large subunit contains a 21S rRNA (21S mt-rRNA) and at least 45 different proteins. bL32m has a zinc binding site. In terms of processing, MRPL32 precursor is processed by the m-AAA protease, which cleaves the N-terminal transit peptide. Cleavage by the m-AAA protease takes place prior to assembly into the large subunit, an essential step for mitochondrial ribosome (mitoribosome) assembly. Proper processing by the m-AAA protease is dependent on the zinc-binding region within the tightly folded C-terminal domain of MRPL32: zinc-dependent folding halts degradation initiated from the N-terminus and triggers the release of mature mrpl32.

Its subcellular location is the mitochondrion. Functionally, component of the mitochondrial ribosome (mitoribosome), a dedicated translation machinery responsible for the synthesis of mitochondrial genome-encoded proteins, including at least some of the essential transmembrane subunits of the mitochondrial respiratory chain. The mitoribosomes are attached to the mitochondrial inner membrane and translation products are cotranslationally integrated into the membrane. This chain is Large ribosomal subunit protein bL32m (mrpl32), found in Schizosaccharomyces pombe (strain 972 / ATCC 24843) (Fission yeast).